We begin with the raw amino-acid sequence, 294 residues long: Nucleophosmin (294 aa).

Position 1 is an N-acetylmethionine (Met-1). The tract at residues Met-1–Val-117 is necessary for interaction with APEX1. The required for interaction with SENP3 stretch occupies residues Met-1–Ala-186. A Phosphoserine; by PLK1 and PLK2 modification is found at Ser-4. The residue at position 10 (Ser-10) is a Phosphoserine. A Glycyl lysine isopeptide (Lys-Gly) (interchain with G-Cter in SUMO2) cross-link involves residue Lys-27. Lys-32 carries the post-translational modification N6-acetyllysine; alternate. Residue Lys-32 forms a Glycyl lysine isopeptide (Lys-Gly) (interchain with G-Cter in SUMO1); alternate linkage. A Glycyl lysine isopeptide (Lys-Gly) (interchain with G-Cter in SUMO2); alternate cross-link involves residue Lys-32. Ser-43 is subject to Phosphoserine. Phosphotyrosine is present on Tyr-67. Ser-70 carries the post-translational modification Phosphoserine. Phosphothreonine is present on residues Thr-75 and Thr-95. Acidic residues predominate over residues Glu-120–Asp-132. The disordered stretch occupies residues Glu-120–Ile-247. Ser-125 bears the Phosphoserine; by CDK2 mark. Ser-137 and Ser-139 each carry phosphoserine. Lys-141 participates in a covalent cross-link: Glycyl lysine isopeptide (Lys-Gly) (interchain with G-Cter in SUMO2). Position 150 is an N6-acetyllysine; alternate (Lys-150). A Glycyl lysine isopeptide (Lys-Gly) (interchain with G-Cter in SUMO2); alternate cross-link involves residue Lys-150. The short motif at Pro-152–Lys-157 is the Nuclear localization signal element. Lys-154 is subject to N6-acetyllysine. Positions Asp-161 to Glu-187 are enriched in acidic residues. Positions Glu-187–Lys-215 are interaction with NOP2. The span at Glu-188 to Pro-200 shows a compositional bias: basic and acidic residues. A Nuclear localization signal motif is present at residues Pro-191–Arg-197. Position 199 is a phosphothreonine; by CDK1, CDK2 and CDK6 (Thr-199). Residues Lys-202–Ser-222 show a composition bias toward polar residues. An ADP-ribosylserine modification is found at Ser-207. The residue at position 212 (Lys-212) is an N6-acetyllysine. A Glycyl lysine isopeptide (Lys-Gly) (interchain with G-Cter in SUMO2) cross-link involves residue Lys-215. Position 219 is a phosphothreonine; by CDK1 (Thr-219). The segment covering Lys-223–Pro-235 has biased composition (basic and acidic residues). Ser-227 is subject to Phosphoserine. An N6-acetyllysine modification is found at Lys-229. Lys-230 is modified (N6-acetyllysine; alternate). Residue Lys-230 forms a Glycyl lysine isopeptide (Lys-Gly) (interchain with G-Cter in SUMO); alternate linkage. Thr-234 and Thr-237 each carry phosphothreonine; by CDK1. Phosphoserine is present on residues Ser-242 and Ser-243. A required for nucleolar localization region spans residues Ser-243–Leu-294. Residue Lys-248 forms a Glycyl lysine isopeptide (Lys-Gly) (interchain with G-Cter in SUMO1); alternate linkage. Glycyl lysine isopeptide (Lys-Gly) (interchain with G-Cter in SUMO2); alternate cross-links involve residues Lys-248 and Lys-250. Lys-250 bears the N6-acetyllysine; alternate mark. Position 254 is a phosphoserine (Ser-254). Lys-257 is subject to N6-acetyllysine; alternate. Lys-257 participates in a covalent cross-link: Glycyl lysine isopeptide (Lys-Gly) (interchain with G-Cter in SUMO1); alternate. Lys-257 is covalently cross-linked (Glycyl lysine isopeptide (Lys-Gly) (interchain with G-Cter in SUMO2); alternate). Lys-257 bears the N6-acetyllysine mark. A Phosphoserine modification is found at Ser-260. Glycyl lysine isopeptide (Lys-Gly) (interchain with G-Cter in SUMO2); alternate cross-links involve residues Lys-263, Lys-267, and Lys-273. Lys-263 is covalently cross-linked (Glycyl lysine isopeptide (Lys-Gly) (interchain with G-Cter in SUMO); alternate). 2 positions are modified to N6-acetyllysine; alternate: Lys-267 and Lys-273. Residue Lys-267 forms a Glycyl lysine isopeptide (Lys-Gly) (interchain with G-Cter in SUMO1); alternate linkage. Residue Lys-267 is modified to N6-succinyllysine; alternate. At Thr-279 the chain carries Phosphothreonine. Lys-292 is subject to N6-acetyllysine.

It belongs to the nucleoplasmin family. As to quaternary structure, decamer formed by two pentameric rings associated in a head-to-head fashion. Disulfide-linked dimers under certain conditions. The SWAP complex consists of NPM1, NCL, PARP1 and SWAP70. Interacts with NSUN2 and SENP3. Interacts with the methylated form of RPS10. Interacts (via N-terminal domain) with APEX1; the interaction is RNA-dependent and decreases in hydrogen peroxide-damaged cells. Interacts with isoform 1 of NEK2. Interacts with ROCK2 and BRCA2. Interacts with RPGR. Interacts with CENPW. Interacts with EIF2AK2/PKR. Interacts with CEBPA (isoform 4). Interacts with DDX31; this interaction prevents interaction between NPM1 and HDM2. Interacts with MYC; competitive with NOP53. Interacts with NOP53; the interaction is direct and competitive with MYC. Interacts with LRRC34. Interacts with RRP1B. Interacts with NPM3. Interacts with ALKBH2. Interacts with TTF1 (via C-terminal region). Interacts with NOP2. Interacts with ARID3C (via REKLES DOMAIN); the interaction mediates ARID3C nuclear shuttling. (Microbial infection) Interacts with hepatitis delta virus S-HDAg. In terms of assembly, (Microbial infection) Interacts with HTLV1 Rex protein (via N-terminal nuclear localization signal). In terms of processing, acetylated at C-terminal lysine residues, thereby increasing affinity to histones. Post-translationally, ADP-ribosylated. Phosphorylated at Ser-4 by PLK1 and PLK2. Phosphorylation at Ser-4 by PLK2 in S phase is required for centriole duplication and is sufficient to trigger centriole replication. Phosphorylation at Ser-4 by PLK1 takes place during mitosis. Phosphorylated by CDK2 at Ser-125 and Thr-199. Phosphorylation at Thr-199 may trigger initiation of centrosome duplication. Phosphorylated by CDK1 at Thr-199, Thr-219, Thr-234 and Thr-237 during cell mitosis. When these four sites are phosphorated, RNA-binding activity seem to be abolished. May be phosphorylated at Ser-70 by NEK2. The Thr-199 phosphorylated form has higher affinity for ROCK2. CDK6 triggers Thr-199 phosphorylation when complexed to Kaposi's sarcoma herpesvirus (KSHV) V-cyclin, leading to viral reactivation by reducing viral LANA levels. In terms of processing, sumoylated by ARF. Post-translationally, ubiquitinated. Ubiquitination leads to proteasomal degradation. Deubiquitinated by USP36.

It localises to the nucleus. Its subcellular location is the nucleolus. It is found in the nucleoplasm. The protein localises to the cytoplasm. The protein resides in the cytoskeleton. It localises to the microtubule organizing center. Its subcellular location is the centrosome. In terms of biological role, involved in diverse cellular processes such as ribosome biogenesis, centrosome duplication, protein chaperoning, histone assembly, cell proliferation, and regulation of tumor suppressors p53/TP53 and ARF. Binds ribosome presumably to drive ribosome nuclear export. Associated with nucleolar ribonucleoprotein structures and bind single-stranded nucleic acids. Acts as a chaperonin for the core histones H3, H2B and H4. Stimulates APEX1 endonuclease activity on apurinic/apyrimidinic (AP) double-stranded DNA but inhibits APEX1 endonuclease activity on AP single-stranded RNA. May exert a control of APEX1 endonuclease activity within nucleoli devoted to repair AP on rDNA and the removal of oxidized rRNA molecules. In concert with BRCA2, regulates centrosome duplication. Regulates centriole duplication: phosphorylation by PLK2 is able to trigger centriole replication. Negatively regulates the activation of EIF2AK2/PKR and suppresses apoptosis through inhibition of EIF2AK2/PKR autophosphorylation. Antagonizes the inhibitory effect of ATF5 on cell proliferation and relieves ATF5-induced G2/M blockade. In complex with MYC enhances the transcription of MYC target genes. May act as chaperonin or cotransporter in the nucleolar localization of transcription termination factor TTF1. This is Nucleophosmin from Homo sapiens (Human).